Consider the following 462-residue polypeptide: ATP synthase subunit beta (462 aa).

ATP is bound at residue 151–158 (GGAGVGKT).

Belongs to the ATPase alpha/beta chains family. In terms of assembly, F-type ATPases have 2 components, CF(1) - the catalytic core - and CF(0) - the membrane proton channel. CF(1) has five subunits: alpha(3), beta(3), gamma(1), delta(1), epsilon(1). CF(0) has three main subunits: a(1), b(2) and c(9-12). The alpha and beta chains form an alternating ring which encloses part of the gamma chain. CF(1) is attached to CF(0) by a central stalk formed by the gamma and epsilon chains, while a peripheral stalk is formed by the delta and b chains.

The protein localises to the cell inner membrane. It catalyses the reaction ATP + H2O + 4 H(+)(in) = ADP + phosphate + 5 H(+)(out). Its function is as follows. Produces ATP from ADP in the presence of a proton gradient across the membrane. The catalytic sites are hosted primarily by the beta subunits. The chain is ATP synthase subunit beta from Chlorobaculum parvum (strain DSM 263 / NCIMB 8327) (Chlorobium vibrioforme subsp. thiosulfatophilum).